The following is a 229-amino-acid chain: 2,3-bisphosphoglycerate-dependent phosphoglycerate mutase (229 aa).

Residues 8 to 15 (RHGESAWN), 21 to 22 (TG), R60, 87 to 90 (ERHY), K98, 114 to 115 (RR), and 183 to 184 (GN) contribute to the substrate site. H9 serves as the catalytic Tele-phosphohistidine intermediate. Residue E87 is the Proton donor/acceptor of the active site.

This sequence belongs to the phosphoglycerate mutase family. BPG-dependent PGAM subfamily. In terms of assembly, homodimer.

It catalyses the reaction (2R)-2-phosphoglycerate = (2R)-3-phosphoglycerate. The protein operates within carbohydrate degradation; glycolysis; pyruvate from D-glyceraldehyde 3-phosphate: step 3/5. In terms of biological role, catalyzes the interconversion of 2-phosphoglycerate and 3-phosphoglycerate. In Polynucleobacter necessarius subsp. necessarius (strain STIR1), this protein is 2,3-bisphosphoglycerate-dependent phosphoglycerate mutase.